Consider the following 156-residue polypeptide: Arginine repressor (156 aa).

The protein belongs to the ArgR family.

It localises to the cytoplasm. It participates in amino-acid biosynthesis; L-arginine biosynthesis [regulation]. Regulates arginine biosynthesis genes. The protein is Arginine repressor of Yersinia enterocolitica serotype O:8 / biotype 1B (strain NCTC 13174 / 8081).